We begin with the raw amino-acid sequence, 56 residues long: FAPVNVDCSDHPKPACLQEQKPICGSDNKTYDNKCSFCNAVVDSNGTLTLSHFGKC.

The region spanning 6–56 (VDCSDHPKPACLQEQKPICGSDNKTYDNKCSFCNAVVDSNGTLTLSHFGKC) is the Kazal-like domain. 3 disulfide bridges follow: C8-C38, C16-C35, and C24-C56. Residue N45 is glycosylated (N-linked (GlcNAc...) asparagine).

The protein localises to the secreted. This is Ovomucoid from Ortalis vetula (Plain chachalaca).